We begin with the raw amino-acid sequence, 81 residues long: D-alanyl carrier protein (81 aa).

Residues 1–81 (MADEAIKNGV…KIIAKVEQAQ (81 aa)) form the Carrier domain. An O-(pantetheine 4'-phosphoryl)serine modification is found at S39.

This sequence belongs to the DltC family. 4'-phosphopantetheine is transferred from CoA to a specific serine of apo-DCP.

It localises to the cytoplasm. It participates in cell wall biogenesis; lipoteichoic acid biosynthesis. Its function is as follows. Carrier protein involved in the D-alanylation of lipoteichoic acid (LTA). The loading of thioester-linked D-alanine onto DltC is catalyzed by D-alanine--D-alanyl carrier protein ligase DltA. The DltC-carried D-alanyl group is further transferred to cell membrane phosphatidylglycerol (PG) by forming an ester bond, probably catalyzed by DltD. D-alanylation of LTA plays an important role in modulating the properties of the cell wall in Gram-positive bacteria, influencing the net charge of the cell wall. The protein is D-alanyl carrier protein of Lacticaseibacillus rhamnosus (Lactobacillus rhamnosus).